Here is a 413-residue protein sequence, read N- to C-terminus: 1-deoxy-D-xylulose 5-phosphate reductoisomerase (413 aa).

Positions 21, 22, 23, 24, 47, and 127 each coordinate NADPH. Lys128 lines the 1-deoxy-D-xylulose 5-phosphate pocket. Glu129 contacts NADPH. Asp151 lines the Mn(2+) pocket. 1-deoxy-D-xylulose 5-phosphate contacts are provided by Ser152, Glu153, Ser177, and His200. Mn(2+) is bound at residue Glu153. Gly206 contributes to the NADPH binding site. Residues Ser213, Asn218, Lys219, and Glu222 each coordinate 1-deoxy-D-xylulose 5-phosphate. Glu222 lines the Mn(2+) pocket.

The protein belongs to the DXR family. Requires Mg(2+) as cofactor. Mn(2+) is required as a cofactor.

It catalyses the reaction 2-C-methyl-D-erythritol 4-phosphate + NADP(+) = 1-deoxy-D-xylulose 5-phosphate + NADPH + H(+). It functions in the pathway isoprenoid biosynthesis; isopentenyl diphosphate biosynthesis via DXP pathway; isopentenyl diphosphate from 1-deoxy-D-xylulose 5-phosphate: step 1/6. Functionally, catalyzes the NADPH-dependent rearrangement and reduction of 1-deoxy-D-xylulose-5-phosphate (DXP) to 2-C-methyl-D-erythritol 4-phosphate (MEP). The protein is 1-deoxy-D-xylulose 5-phosphate reductoisomerase of Mycobacterium bovis (strain ATCC BAA-935 / AF2122/97).